Here is a 1062-residue protein sequence, read N- to C-terminus: Carbamoyl phosphate synthase large chain (1062 aa).

Residues 1 to 401 (MPKRTDIHKI…AMQKAVQSLE (401 aa)) form a carboxyphosphate synthetic domain region. Positions 129, 169, 175, 176, 208, 210, 215, 241, 242, 243, 284, and 298 each coordinate ATP. In terms of domain architecture, ATP-grasp 1 spans 133–327 (KELCQKLGEP…IAKMAAKIAI (195 aa)). Mg(2+) is bound by residues glutamine 284, glutamate 298, and asparagine 300. Positions 284, 298, and 300 each coordinate Mn(2+). Residues 402–546 (IDEKDLYSAK…YSTYDGENES (145 aa)) are oligomerization domain. The segment at 547–929 (RKSGKKSVIV…ALYKAFAGAK (383 aa)) is carbamoyl phosphate synthetic domain. Residues 671–861 (DQIIKSLHLH…MAQVATRVIM (191 aa)) enclose the ATP-grasp 2 domain. ATP contacts are provided by arginine 707, aspartate 746, leucine 748, glutamate 752, glycine 777, valine 778, histidine 779, serine 780, glutamine 820, and glutamate 832. Residues glutamine 820, glutamate 832, and asparagine 834 each contribute to the Mg(2+) site. Mn(2+) is bound by residues glutamine 820, glutamate 832, and asparagine 834. The MGS-like domain occupies 930-1062 (MQLPENGNVL…NRSFATDALK (133 aa)). The interval 930 to 1062 (MQLPENGNVL…NRSFATDALK (133 aa)) is allosteric domain.

The protein belongs to the CarB family. Composed of two chains; the small (or glutamine) chain promotes the hydrolysis of glutamine to ammonia, which is used by the large (or ammonia) chain to synthesize carbamoyl phosphate. Tetramer of heterodimers (alpha,beta)4. It depends on Mg(2+) as a cofactor. Requires Mn(2+) as cofactor.

It catalyses the reaction hydrogencarbonate + L-glutamine + 2 ATP + H2O = carbamoyl phosphate + L-glutamate + 2 ADP + phosphate + 2 H(+). It carries out the reaction hydrogencarbonate + NH4(+) + 2 ATP = carbamoyl phosphate + 2 ADP + phosphate + 2 H(+). It functions in the pathway amino-acid biosynthesis; L-arginine biosynthesis; carbamoyl phosphate from bicarbonate: step 1/1. Its pathway is pyrimidine metabolism; UMP biosynthesis via de novo pathway; (S)-dihydroorotate from bicarbonate: step 1/3. Large subunit of the glutamine-dependent carbamoyl phosphate synthetase (CPSase). CPSase catalyzes the formation of carbamoyl phosphate from the ammonia moiety of glutamine, carbonate, and phosphate donated by ATP, constituting the first step of 2 biosynthetic pathways, one leading to arginine and/or urea and the other to pyrimidine nucleotides. The large subunit (synthetase) binds the substrates ammonia (free or transferred from glutamine from the small subunit), hydrogencarbonate and ATP and carries out an ATP-coupled ligase reaction, activating hydrogencarbonate by forming carboxy phosphate which reacts with ammonia to form carbamoyl phosphate. In Lactobacillus delbrueckii subsp. bulgaricus (strain ATCC BAA-365 / Lb-18), this protein is Carbamoyl phosphate synthase large chain.